Here is a 417-residue protein sequence, read N- to C-terminus: Tyrosine--tRNA ligase (417 aa).

Y39 is an L-tyrosine binding site. Residues 44-53 (PTAPSLHAGG) carry the 'HIGH' region motif. Y176 and Q180 together coordinate L-tyrosine. Positions 236-240 (KMGKS) match the 'KMSKS' region motif. Position 239 (K239) interacts with ATP. Residues 350 to 417 (IGVLALMVLA…KKRHVLIRPA (68 aa)) form the S4 RNA-binding domain.

This sequence belongs to the class-I aminoacyl-tRNA synthetase family. TyrS type 1 subfamily. Homodimer.

It is found in the cytoplasm. The enzyme catalyses tRNA(Tyr) + L-tyrosine + ATP = L-tyrosyl-tRNA(Tyr) + AMP + diphosphate + H(+). Functionally, catalyzes the attachment of tyrosine to tRNA(Tyr) in a two-step reaction: tyrosine is first activated by ATP to form Tyr-AMP and then transferred to the acceptor end of tRNA(Tyr). The sequence is that of Tyrosine--tRNA ligase from Brucella abortus (strain 2308).